The sequence spans 137 residues: Crustacean calcium-binding protein 23 (137 aa).

EF-hand domains lie at 27–48 (RDSSWTLSKEELSRGVSQFGLD), 62–97 (EKKAAVEAAFKHLDKTGDGVVTVEDIKGVYSAKVVK), and 100–135 (ATEEEILKKFLNMFESSTSVDGKVTKKEFLDYYSGL).

In terms of assembly, monomer or disulfide-linked dimers.

In terms of biological role, possibly acts as a regulatory protein and not as a calcium buffer or transport protein. This Homarus americanus (American lobster) protein is Crustacean calcium-binding protein 23.